The following is a 295-amino-acid chain: ATP synthase gamma chain (295 aa).

It belongs to the ATPase gamma chain family. F-type ATPases have 2 components, CF(1) - the catalytic core - and CF(0) - the membrane proton channel. CF(1) has five subunits: alpha(3), beta(3), gamma(1), delta(1), epsilon(1). CF(0) has three main subunits: a, b and c.

It is found in the cell membrane. Functionally, produces ATP from ADP in the presence of a proton gradient across the membrane. The gamma chain is believed to be important in regulating ATPase activity and the flow of protons through the CF(0) complex. This Acetivibrio thermocellus (strain ATCC 27405 / DSM 1237 / JCM 9322 / NBRC 103400 / NCIMB 10682 / NRRL B-4536 / VPI 7372) (Clostridium thermocellum) protein is ATP synthase gamma chain.